We begin with the raw amino-acid sequence, 433 residues long: Serine--tRNA ligase (433 aa).

235 to 237 lines the L-serine pocket; it reads TSE. 266-268 contacts ATP; that stretch reads RSE. An L-serine-binding site is contributed by glutamate 289. 353 to 356 is a binding site for ATP; it reads EISS. Serine 388 serves as a coordination point for L-serine.

It belongs to the class-II aminoacyl-tRNA synthetase family. Type-1 seryl-tRNA synthetase subfamily. In terms of assembly, homodimer. The tRNA molecule binds across the dimer.

The protein resides in the cytoplasm. It carries out the reaction tRNA(Ser) + L-serine + ATP = L-seryl-tRNA(Ser) + AMP + diphosphate + H(+). It catalyses the reaction tRNA(Sec) + L-serine + ATP = L-seryl-tRNA(Sec) + AMP + diphosphate + H(+). Its pathway is aminoacyl-tRNA biosynthesis; selenocysteinyl-tRNA(Sec) biosynthesis; L-seryl-tRNA(Sec) from L-serine and tRNA(Sec): step 1/1. Its function is as follows. Catalyzes the attachment of serine to tRNA(Ser). Is also able to aminoacylate tRNA(Sec) with serine, to form the misacylated tRNA L-seryl-tRNA(Sec), which will be further converted into selenocysteinyl-tRNA(Sec). This chain is Serine--tRNA ligase, found in Burkholderia cenocepacia (strain ATCC BAA-245 / DSM 16553 / LMG 16656 / NCTC 13227 / J2315 / CF5610) (Burkholderia cepacia (strain J2315)).